Reading from the N-terminus, the 289-residue chain is ATP synthase subunit a (289 aa).

6 helical membrane-spanning segments follow: residues 43–63, 104–124, 160–180, 193–213, 232–252, and 259–279; these read AFHL…LLIF, IAPL…VDLI, FCVF…GGFI, IFVQ…TLIA, VFIL…GLGV, and AVFH…LTIV.

Belongs to the ATPase A chain family. In terms of assembly, F-type ATPases have 2 components, CF(1) - the catalytic core - and CF(0) - the membrane proton channel. CF(1) has five subunits: alpha(3), beta(3), gamma(1), delta(1), epsilon(1). CF(0) has three main subunits: a(1), b(2) and c(9-12). The alpha and beta chains form an alternating ring which encloses part of the gamma chain. CF(1) is attached to CF(0) by a central stalk formed by the gamma and epsilon chains, while a peripheral stalk is formed by the delta and b chains.

The protein resides in the cell inner membrane. Functionally, key component of the proton channel; it plays a direct role in the translocation of protons across the membrane. In Pseudomonas putida (strain ATCC 47054 / DSM 6125 / CFBP 8728 / NCIMB 11950 / KT2440), this protein is ATP synthase subunit a.